The primary structure comprises 354 residues: Uroporphyrinogen decarboxylase (354 aa).

Substrate contacts are provided by residues 25 to 29 (RQAGR), D75, Y152, T207, and H330.

Belongs to the uroporphyrinogen decarboxylase family. As to quaternary structure, homodimer.

The protein resides in the cytoplasm. It catalyses the reaction uroporphyrinogen III + 4 H(+) = coproporphyrinogen III + 4 CO2. Its pathway is porphyrin-containing compound metabolism; protoporphyrin-IX biosynthesis; coproporphyrinogen-III from 5-aminolevulinate: step 4/4. Catalyzes the decarboxylation of four acetate groups of uroporphyrinogen-III to yield coproporphyrinogen-III. This chain is Uroporphyrinogen decarboxylase, found in Xanthomonas oryzae pv. oryzae (strain MAFF 311018).